Here is a 228-residue protein sequence, read N- to C-terminus: MGQKVHPTGIRLGIVKEHTSVWYADGATYADYLLKDLQTREYLQDKLKSASVSRIDIHRPAQTARITIHTARPGIVIGKKGEDVEKLRQDLTKQMGVPVHINIEEIRKPELDAMLVAQSVAQQLERRVMFRRAMKRAVQNAMRIGAKGIKIQVSGRLGGAEIARTEWYREGRVPLHTLRADIDYNTYEAHTTYGVIGVKVWIFKGEVIGGRQEELKPQAPAPRKKAAK.

In terms of domain architecture, KH type-2 spans 39 to 107 (TREYLQDKLK…PVHINIEEIR (69 aa)).

Belongs to the universal ribosomal protein uS3 family. In terms of assembly, part of the 30S ribosomal subunit. Forms a tight complex with proteins S10 and S14.

Functionally, binds the lower part of the 30S subunit head. Binds mRNA in the 70S ribosome, positioning it for translation. This is Small ribosomal subunit protein uS3 from Pseudomonas entomophila (strain L48).